Here is a 154-residue protein sequence, read N- to C-terminus: Large ribosomal subunit protein uL15 (154 aa).

Residues 1-13 show a composition bias toward basic and acidic residues; that stretch reads MKLHELKPAEGSR. Positions 1–52 are disordered; it reads MKLHELKPAEGSRKNRKRVGRGPGGTDKTAGRGHKGQKSRSGAGKGSFFEGG.

The protein belongs to the universal ribosomal protein uL15 family. Part of the 50S ribosomal subunit.

Binds to the 23S rRNA. The chain is Large ribosomal subunit protein uL15 from Deinococcus deserti (strain DSM 17065 / CIP 109153 / LMG 22923 / VCD115).